We begin with the raw amino-acid sequence, 424 residues long: UDP-sugar transporter protein SLC35A5 (424 aa).

The Cytoplasmic segment spans residues 1–8 (MEKQCCSH). The chain crosses the membrane as a helical span at residues 9–29 (PVICSLSTMYTFLLGAIFIAL). Topologically, residues 30–53 (SSSRILLVKYSANEENKYDYLPTT) are lumenal. Residues 54–74 (ANVCSELVKLVFCVLVSFCVI) traverse the membrane as a helical segment. At 75-93 (KKDHQSRNLKYASWKEFSN) the chain is on the cytoplasmic side. A helical transmembrane segment spans residues 94–116 (FMKWSIPAFLYFLDNLIVFYVLS). Topologically, residues 117 to 119 (YLQ) are lumenal. A helical transmembrane segment spans residues 120–142 (PAMAVIFSNFSIITTALLFRIVL). Residues 143-147 (KRRLN) lie on the Cytoplasmic side of the membrane. Residues 148–168 (WIQWASLLILFLSIVALTAGT) traverse the membrane as a helical segment. Over 169-228 (KTLQHNLAGHGFHHDAFFSPSNSCLLFRSECPRKDNCTAKEWTFPEAKWNTTARVFSHIR) the chain is Lumenal. Residue Asn-204 is glycosylated (N-linked (GlcNAc...) asparagine). A helical transmembrane segment spans residues 229–249 (LGMGHVLIIVQCFISSMANIY). The Cytoplasmic portion of the chain corresponds to 250-263 (NEKILKEGNQLAES). The helical transmembrane segment at 264–284 (IFIQNSKLYFFGILFNGLTLG) threads the bilayer. The Lumenal segment spans residues 285-303 (LQRSNRDQIKNCGFFYGHN). The chain crosses the membrane as a helical span at residues 304 to 324 (AFSVALIFVTAFQGLSVAFIL). The Cytoplasmic portion of the chain corresponds to 325–330 (KFLDNM). A helical transmembrane segment spans residues 331-351 (FHVLMAQVTTVIITTVSVLVF). The Lumenal portion of the chain corresponds to 352-354 (DFR). The chain crosses the membrane as a helical span at residues 355–375 (PSLEFFLEAPSVLLSIFIYNA). At 376–424 (SKPQGPEYAPRQERIRDLSGNLWERSSGDGEELERLTKPKSDESDEDTF) the chain is on the cytoplasmic side. Phosphoserine occurs at positions 394, 416, and 419. A disordered region spans residues 395–424 (GNLWERSSGDGEELERLTKPKSDESDEDTF). Basic and acidic residues predominate over residues 408–417 (LERLTKPKSD).

The protein belongs to the nucleotide-sugar transporter family. SLC35A subfamily. Probably forms homooligomers and heterooligomers with SLC35A1, SLC35A2, SLC35A3 and SLC35A4.

The protein localises to the golgi apparatus membrane. It carries out the reaction UMP(out) + UDP-alpha-D-glucuronate(in) = UMP(in) + UDP-alpha-D-glucuronate(out). The enzyme catalyses UMP(out) + UDP-N-acetyl-alpha-D-glucosamine(in) = UMP(in) + UDP-N-acetyl-alpha-D-glucosamine(out). The catalysed reaction is UDP-N-acetyl-alpha-D-galactosamine(in) + UMP(out) = UDP-N-acetyl-alpha-D-galactosamine(out) + UMP(in). Probable UDP-sugar:UMP transmembrane antiporter involved in UDP-alpha-D-glucuronate/UDP-GlcA, UDP-GlcNAc/UDP-N-acetyl-alpha-D-glucosamine and UDP-N-acetyl-alpha-D-galactosamine/UDP-GalNAc transport from the cytosol to the lumen of the Golgi. The protein is UDP-sugar transporter protein SLC35A5 of Pongo abelii (Sumatran orangutan).